We begin with the raw amino-acid sequence, 129 residues long: Small ribosomal subunit protein uS11c (129 aa).

It belongs to the universal ribosomal protein uS11 family. In terms of assembly, part of the 30S ribosomal subunit.

Its subcellular location is the plastid. It localises to the chloroplast. In Euglena gracilis, this protein is Small ribosomal subunit protein uS11c.